A 370-amino-acid polypeptide reads, in one-letter code: Protein-tyrosine sulfotransferase 1 (370 aa).

Residues 1–8 are Cytoplasmic-facing; sequence MVGKLKQN. The helical; Signal-anchor for type II membrane protein transmembrane segment at 9-25 threads the bilayer; sequence LLLACLVISSVTVFYLG. The Lumenal portion of the chain corresponds to 26-370; sequence QHAMECHHRI…KEKPQTEQVE (345 aa). The N-linked (GlcNAc...) asparagine glycan is linked to asparagine 60. Position 79–83 (79–83) interacts with 3'-phosphoadenylyl sulfate; sequence RSGTT. Residues cysteine 97 and cysteine 157 are joined by a disulfide bond. Glutamate 100 functions as the Proton donor/acceptor in the catalytic mechanism. The interaction with peptide substrate stretch occupies residues 102-106; it reads RVIPR. Residues arginine 184, serine 192, and arginine 196 each contribute to the 3'-phosphoadenylyl sulfate site. Cysteine 226 and cysteine 234 form a disulfide bridge. Tyrosine 239 is a 3'-phosphoadenylyl sulfate binding site. Asparagine 262 carries N-linked (GlcNAc...) asparagine glycosylation. 3'-phosphoadenylyl sulfate is bound by residues 286-295 and lysine 301; that span reads STDQVIKPVN.

The protein belongs to the protein sulfotransferase family. Homodimer. Can also form heterodimers with TPST2. Post-translationally, N-glycosylated.

It localises to the golgi apparatus membrane. The catalysed reaction is L-tyrosyl-[protein] + 3'-phosphoadenylyl sulfate = O-sulfo-L-tyrosine-[protein] + adenosine 3',5'-bisphosphate + H(+). Its function is as follows. Catalyzes the O-sulfation of tyrosine residues within acidic motifs of polypeptides, using 3'-phosphoadenylyl sulfate (PAPS) as cosubstrate. The sequence is that of Protein-tyrosine sulfotransferase 1 (Tpst1) from Rattus norvegicus (Rat).